Consider the following 559-residue polypeptide: Formate--tetrahydrofolate ligase (559 aa).

Position 68 to 75 (68 to 75) interacts with ATP; the sequence is TPAGEGKS.

The protein belongs to the formate--tetrahydrofolate ligase family.

The enzyme catalyses (6S)-5,6,7,8-tetrahydrofolate + formate + ATP = (6R)-10-formyltetrahydrofolate + ADP + phosphate. The protein operates within one-carbon metabolism; tetrahydrofolate interconversion. The sequence is that of Formate--tetrahydrofolate ligase from Lactobacillus gasseri (strain ATCC 33323 / DSM 20243 / BCRC 14619 / CIP 102991 / JCM 1131 / KCTC 3163 / NCIMB 11718 / NCTC 13722 / AM63).